The chain runs to 164 residues: 2-C-methyl-D-erythritol 2,4-cyclodiphosphate synthase (164 aa).

A divalent metal cation is bound by residues D9 and H11. Residues D9 to H11 and H35 to S36 contribute to the 4-CDP-2-C-methyl-D-erythritol 2-phosphate site. H43 is a binding site for a divalent metal cation. Residues D57–G59, F62–D66, T133–E136, F140, and R143 each bind 4-CDP-2-C-methyl-D-erythritol 2-phosphate.

The protein belongs to the IspF family. As to quaternary structure, homotrimer. A divalent metal cation is required as a cofactor.

It catalyses the reaction 4-CDP-2-C-methyl-D-erythritol 2-phosphate = 2-C-methyl-D-erythritol 2,4-cyclic diphosphate + CMP. It functions in the pathway isoprenoid biosynthesis; isopentenyl diphosphate biosynthesis via DXP pathway; isopentenyl diphosphate from 1-deoxy-D-xylulose 5-phosphate: step 4/6. Involved in the biosynthesis of isopentenyl diphosphate (IPP) and dimethylallyl diphosphate (DMAPP), two major building blocks of isoprenoid compounds. Catalyzes the conversion of 4-diphosphocytidyl-2-C-methyl-D-erythritol 2-phosphate (CDP-ME2P) to 2-C-methyl-D-erythritol 2,4-cyclodiphosphate (ME-CPP) with a corresponding release of cytidine 5-monophosphate (CMP). The chain is 2-C-methyl-D-erythritol 2,4-cyclodiphosphate synthase from Syntrophotalea carbinolica (strain DSM 2380 / NBRC 103641 / GraBd1) (Pelobacter carbinolicus).